A 445-amino-acid chain; its full sequence is GTPase Der (445 aa).

2 EngA-type G domains span residues 3-167 and 180-353; these read PVIA…YAGE and IKIA…AAAM. Residues 9 to 16, 56 to 60, 119 to 122, 186 to 193, 233 to 237, and 298 to 301 each bind GTP; these read GRPNVGKS, DTGGF, NKAE, DTAGL, and NKWD. One can recognise a KH-like domain in the interval 354–438; that stretch reads KKLPTPKLTR…PLRIEFRSST (85 aa).

It belongs to the TRAFAC class TrmE-Era-EngA-EngB-Septin-like GTPase superfamily. EngA (Der) GTPase family. Associates with the 50S ribosomal subunit.

Functionally, GTPase that plays an essential role in the late steps of ribosome biogenesis. The chain is GTPase Der from Burkholderia pseudomallei (strain 1106a).